Reading from the N-terminus, the 199-residue chain is Small ribosomal subunit protein uS4 (199 aa).

In terms of domain architecture, S4 RNA-binding spans 94–157; it reads SRLDNLVYRA…RKLKLVQEAL (64 aa).

The protein belongs to the universal ribosomal protein uS4 family. As to quaternary structure, part of the 30S ribosomal subunit. Contacts protein S5. The interaction surface between S4 and S5 is involved in control of translational fidelity.

Its function is as follows. One of the primary rRNA binding proteins, it binds directly to 16S rRNA where it nucleates assembly of the body of the 30S subunit. With S5 and S12 plays an important role in translational accuracy. This Mycoplasmopsis synoviae (strain 53) (Mycoplasma synoviae) protein is Small ribosomal subunit protein uS4.